We begin with the raw amino-acid sequence, 136 residues long: Diuretic hormone 41 (136 aa).

The N-terminal stretch at 1 to 26 is a signal peptide; the sequence is MMWWAVWCAAMVAGSVFTAAAPPTDS. Positions 27 to 76 are excised as a propeptide; that stretch reads IDLMQMDPSLADDESLGFAMQSLSGRYAAAPWLYLLADVSHDPQNGSDRV. Isoleucine amide is present on Ile-119. The propeptide occupies 123–136; that stretch reads GFHWAPSAKAAKFY.

This sequence belongs to the sauvagine/corticotropin-releasing factor/urotensin I family.

It localises to the secreted. Its function is as follows. Regulation of fluid secretion. This chain is Diuretic hormone 41 (dh41), found in Bombyx mori (Silk moth).